The sequence spans 555 residues: Tetracycline 7-halogenase (555 aa).

22–27 serves as a coordination point for FAD; the sequence is GSGLSG.

This sequence belongs to the flavin-dependent halogenase family. Bacterial tryptophan halogenase subfamily. As to quaternary structure, homodimer.

The enzyme catalyses tetracycline + FADH2 + chloride + O2 = 7-chlorotetracycline + FAD + 2 H2O + H(+). Its pathway is antibiotic biosynthesis. Its function is as follows. Involved in the biosynthesis of chlorotetracycline (CTC), an important member from antibiotics tetracycline (TC) family, which inhibits protein synthesis in bacteria and is widely involved in clinical therapy, animal feeds and aquaculture. Utilizes FADH(2) supplied by the flavin reductase CtcQ, to catalyze the chlorination of tetracycline (TC) at C7 position, leading to the production of 7-chlorotetracycline. The enzyme forms a lysine chloramine intermediate on an internal lysine residue before transferring the chlorine to the substrate. It is stereo-selective for the 4S (natural) isomer of tetracycline. This is Tetracycline 7-halogenase from Kitasatospora aureofaciens (Streptomyces aureofaciens).